The following is a 215-amino-acid chain: Probable phosphoglycerate mutase GpmB (215 aa).

Substrate is bound by residues 8–15 (RHGETEWN), 21–22 (QG), arginine 58, arginine 60, 82–85 (ELHM), and 151–152 (GI). Histidine 9 (tele-phosphohistidine intermediate) is an active-site residue. Residue glutamate 82 is the Proton donor/acceptor of the active site.

It belongs to the phosphoglycerate mutase family. GpmB subfamily.

It catalyses the reaction (2R)-2-phosphoglycerate = (2R)-3-phosphoglycerate. Its pathway is carbohydrate degradation; glycolysis; pyruvate from D-glyceraldehyde 3-phosphate: step 3/5. This Serratia proteamaculans (strain 568) protein is Probable phosphoglycerate mutase GpmB.